A 236-amino-acid polypeptide reads, in one-letter code: Phosphoribosylaminoimidazole-succinocarboxamide synthase (236 aa).

Belongs to the SAICAR synthetase family.

It catalyses the reaction 5-amino-1-(5-phospho-D-ribosyl)imidazole-4-carboxylate + L-aspartate + ATP = (2S)-2-[5-amino-1-(5-phospho-beta-D-ribosyl)imidazole-4-carboxamido]succinate + ADP + phosphate + 2 H(+). It participates in purine metabolism; IMP biosynthesis via de novo pathway; 5-amino-1-(5-phospho-D-ribosyl)imidazole-4-carboxamide from 5-amino-1-(5-phospho-D-ribosyl)imidazole-4-carboxylate: step 1/2. In Lactococcus lactis subsp. cremoris (Streptococcus cremoris), this protein is Phosphoribosylaminoimidazole-succinocarboxamide synthase (purC).